The sequence spans 176 residues: ATP-dependent protease subunit HslV (176 aa).

Thr-2 is a catalytic residue. Na(+) contacts are provided by Gly-157, Cys-160, and Thr-163.

The protein belongs to the peptidase T1B family. HslV subfamily. In terms of assembly, a double ring-shaped homohexamer of HslV is capped on each side by a ring-shaped HslU homohexamer. The assembly of the HslU/HslV complex is dependent on binding of ATP.

Its subcellular location is the cytoplasm. It carries out the reaction ATP-dependent cleavage of peptide bonds with broad specificity.. Allosterically activated by HslU binding. In terms of biological role, protease subunit of a proteasome-like degradation complex believed to be a general protein degrading machinery. In Escherichia coli O139:H28 (strain E24377A / ETEC), this protein is ATP-dependent protease subunit HslV.